The chain runs to 654 residues: Potassium voltage-gated channel subfamily A member 4 (654 aa).

The Cytoplasmic segment spans residues 1–305 (MEVAMVSAES…LLFEYPESSS (305 aa)). The interval 24 to 145 (QARARERERL…EEGRFYYSEE (122 aa)) is disordered. A compositionally biased stretch (low complexity) spans 36 to 50 (SRAAAAAAVAAATAA). Over residues 81–99 (GSRRRRRQRTEKKKLHHRQ) the composition is skewed to basic residues. Ser122 carries the post-translational modification Phosphoserine. The segment covering 122–137 (SEEEEDEEEEEEEEEE) has biased composition (acidic residues). The helical transmembrane segment at 306-327 (PARGIAIVSVLVILISIVIFCL) threads the bilayer. The Extracellular portion of the chain corresponds to 328-371 (ETLPEFRDDRDLIMALSAGGHSRLLNDTSAPHLENSGHTIFNDP). The N-linked (GlcNAc...) asparagine glycan is linked to Asn353. The chain crosses the membrane as a helical span at residues 372 to 393 (FFIVETVCIVWFSFEFVVRCFA). Residues 394–404 (CPSQALFFKNI) lie on the Cytoplasmic side of the membrane. The helical transmembrane segment at 405-425 (MNIIDIVSILPYFITLGTDLA) threads the bilayer. Residues 426–440 (QQQGGGNGQQQQAMS) lie on the Extracellular side of the membrane. Residues 441-461 (FAILRIIRLVRVFRIFKLSRH) traverse the membrane as a helical; Voltage-sensor segment. Residues 462 to 476 (SKGLQILGHTLRASM) lie on the Cytoplasmic side of the membrane. The segment at 463-476 (KGLQILGHTLRASM) is S4-S5 linker. Residues 477–498 (RELGLLIFFLFIGVILFSSAVY) form a helical membrane-spanning segment. Over 499 to 512 (FAEADEPTTHFQSI) the chain is Extracellular. An intramembrane region (helical) is located at residues 513 to 524 (PDAFWWAVVTMT). Residues 525-530 (TVGYGD) carry the Selectivity filter motif. An intramembrane segment occupies 525 to 532 (TVGYGDMK). The Extracellular segment spans residues 533–539 (PITVGGK). A helical transmembrane segment spans residues 540-568 (IVGSLCAIAGVLTIALPVPVIVSNFNYFY). The Cytoplasmic portion of the chain corresponds to 569–654 (HRETENEEQT…SNAKAVETDV (86 aa)). At Ser600 the chain carries Phosphoserine; by PKA. The span at 630–641 (CQGKGDESETDK) shows a compositional bias: basic and acidic residues. The segment at 630-654 (CQGKGDESETDKNNCSNAKAVETDV) is disordered. The short motif at 652-654 (TDV) is the PDZ-binding element.

Belongs to the potassium channel family. A (Shaker) (TC 1.A.1.2) subfamily. Kv1.4/KCNA4 sub-subfamily. In terms of assembly, homotetramer and heterotetramer of potassium channel proteins. Interacts with KCNAB1 and KCNAB2. Interacts with DLG1, DLG2 and DLG4 via their PDZ domains. Interacts with SIGMAR1. Detected in a complex with KCNA1. Interacts with KCNA2. Part of a complex containing KCNA1, KCNAB1 and LGI1. Interacts (via cytoplasmic N-terminal domain) with KCNRG. As to expression, expressed in the brain, lens and retina.

The protein resides in the cell membrane. Its subcellular location is the cell projection. It localises to the axon. It catalyses the reaction K(+)(in) = K(+)(out). Its function is as follows. Voltage-gated potassium channel that mediates transmembrane potassium transport in excitable membranes. Forms tetrameric potassium-selective channels through which potassium ions pass in accordance with their electrochemical gradient. The channel alternates between opened and closed conformations in response to the voltage difference across the membrane. Can form functional homotetrameric channels and heterotetrameric channels that contain variable proportions of KCNA1, KCNA2, KCNA4, KCNA5, and possibly other family members as well; channel properties depend on the type of alpha subunits that are part of the channel. Channel properties are modulated by cytoplasmic beta subunits that regulate the subcellular location of the alpha subunits and promote rapid inactivation. In vivo, membranes probably contain a mixture of heteromeric potassium channel complexes, making it difficult to assign currents observed in intact tissues to any particular potassium channel family member. Homotetrameric KCNA4 forms a potassium channel that opens in response to membrane depolarization, followed by rapid spontaneous channel closure. Likewise, a heterotetrameric channel formed by KCNA1 and KCNA4 shows rapid inactivation. This chain is Potassium voltage-gated channel subfamily A member 4 (Kcna4), found in Mus musculus (Mouse).